Consider the following 309-residue polypeptide: MYFQDLILKLQTYWASRNCILAQGYDQEVGAGTMNPSTFLRVLGPEPWNVAYVEPSRRPADGRYGENPNRLYQHHQFQVILKPNPPDVQELYLGSLRAIGIDPREHDIRFVEDDWESPTLGAWGLGWEVWCDGMEITQYTYFQQAGGFEVRPVAAELTYGLERIAMYLQDVENVFDVEWVKGVKYREVFHRNEVEMSTYSFQASDPKMLFGLFDTYEAECKRLNGLKLPLPAYDYCLKCSHTFNNLDARGAISVTERAAYIGRVRALAHECARGYLDSREALGFPLLPPADRKQAVEAARAAREARESR.

It belongs to the class-II aminoacyl-tRNA synthetase family. In terms of assembly, tetramer of two alpha and two beta subunits.

The protein resides in the cytoplasm. The enzyme catalyses tRNA(Gly) + glycine + ATP = glycyl-tRNA(Gly) + AMP + diphosphate. This chain is Glycine--tRNA ligase alpha subunit, found in Anaeromyxobacter sp. (strain K).